Consider the following 411-residue polypeptide: Argininosuccinate synthase (411 aa).

ATP is bound by residues 13-21 (AYSGGLDTS) and alanine 40. L-citrulline is bound by residues tyrosine 91 and serine 96. Glycine 121 is a binding site for ATP. L-aspartate is bound by residues threonine 123, asparagine 127, and aspartate 128. Asparagine 127 contributes to the L-citrulline binding site. Residues arginine 131, serine 182, serine 191, glutamate 267, and tyrosine 279 each contribute to the L-citrulline site.

Belongs to the argininosuccinate synthase family. Type 1 subfamily. Homotetramer.

It is found in the cytoplasm. It catalyses the reaction L-citrulline + L-aspartate + ATP = 2-(N(omega)-L-arginino)succinate + AMP + diphosphate + H(+). The protein operates within amino-acid biosynthesis; L-arginine biosynthesis; L-arginine from L-ornithine and carbamoyl phosphate: step 2/3. This chain is Argininosuccinate synthase, found in Bartonella tribocorum (strain CIP 105476 / IBS 506).